Reading from the N-terminus, the 156-residue chain is Protein US1 (156 aa).

Disordered stretches follow at residues 90-114 (RSRS…SDGD) and 133-156 (ARRW…DSTS). Residues 96 to 111 (AESGRSSSSSSVSVLS) show a composition bias toward low complexity. A compositionally biased stretch (polar residues) spans 147 to 156 (SQQAKNDSTS).

In Homo sapiens (Human), this protein is Protein US1 (US1).